The primary structure comprises 667 residues: MSAGQSTSQAAALAAFKSISTHPKTDQNPSKVHQSPERNVKRNPSGRLTNSRNATAVNAINRSPPKAPQKPQLSVVTASGHETKKNVENNRQRSSSPSPLYRTTTPKQMTSPSTSSASLPSNMIKSVKDSIEAKRHASEAKRLAQENQPSDMLTKIRQSINDRTRNIPNQAKVNERNMATINGIRESIESKRITTQANSSMIVLDTSSNSPYNFAPPDELRSPYEAHSPNYSYSSFESVPSAYSNPDSNIDLHDRGPETPSIVVDSPFNSQYDLSSPREDSDIDQERRNTAPILIPPSSNACARSANSAGSADDARSHLSSLKYQVEKEKNEDKNKKPKRKPPPELKPTTDLDGAFFSDSSSLNPGSSRSSLDAGSYSTDNESMGRNRMGSNDSDLSKPIKLPQYPELDTSSTKFKIRKRHGESNQNVGKMTESGSESDFEYPKATVPVSRATAPPLVHQKSQHVQLKTTMRDSKKKKKDKKSFDVDKPWKNHSDLDRISEADRKRYEGVWASNRGTYFNYVVTRINGIDYGSGGGSEQKIIVDEEDSMKAARLSAKQQADTVSGANGGYQSAEFHNITNAEISQLIHSSVVERIWERSRLPSETLRDIWELVDYRKDGTLNKPEFLVGMWLVDQCLYGRKLTKKVPASVWESLEGIGVSVKKKGKR.

Polar residues-rich tracts occupy residues 1-10 (MSAGQSTSQA), 18-33 (SIST…SKVH), and 46-61 (GRLT…NAIN). 4 disordered regions span residues 1-123 (MSAG…PSNM), 133-152 (AKRH…PSDM), 234-441 (SSFE…SDFE), and 459-488 (HQKS…DVDK). The span at 81–91 (HETKKNVENNR) shows a compositional bias: basic and acidic residues. Positions 92 to 109 (QRSSSPSPLYRTTTPKQM) are enriched in polar residues. Residues 110–121 (TSPSTSSASLPS) are compositionally biased toward low complexity. Over residues 133-144 (AKRHASEAKRLA) the composition is skewed to basic and acidic residues. The span at 234–248 (SSFESVPSAYSNPDS) shows a compositional bias: polar residues. A compositionally biased stretch (basic and acidic residues) spans 276 to 289 (SPREDSDIDQERRN). The segment covering 298-312 (SSNACARSANSAGSA) has biased composition (low complexity). Positions 325-335 (QVEKEKNEDKN) are enriched in basic and acidic residues. A compositionally biased stretch (low complexity) spans 358–371 (SDSSSLNPGSSRSS). 2 stretches are compositionally biased toward polar residues: residues 376–394 (SYST…SNDS) and 424–437 (SNQN…SGSE). An EH domain is found at 568 to 661 (GGYQSAEFHN…ESLEGIGVSV (94 aa)).

This sequence belongs to the IRS4 family.

Positive regulator of phosphatidylinositol 4,5-bisphosphate turnover and negatively regulates signaling through the cell integrity pathway. Involved in rDNA silencing. The protein is Increased rDNA silencing protein 4 (IRS4) of Meyerozyma guilliermondii (strain ATCC 6260 / CBS 566 / DSM 6381 / JCM 1539 / NBRC 10279 / NRRL Y-324) (Yeast).